The following is a 317-amino-acid chain: Methionyl-tRNA formyltransferase (317 aa).

(6S)-5,6,7,8-tetrahydrofolate is bound at residue 117-120 (SLLP).

Belongs to the Fmt family.

It carries out the reaction L-methionyl-tRNA(fMet) + (6R)-10-formyltetrahydrofolate = N-formyl-L-methionyl-tRNA(fMet) + (6S)-5,6,7,8-tetrahydrofolate + H(+). In terms of biological role, attaches a formyl group to the free amino group of methionyl-tRNA(fMet). The formyl group appears to play a dual role in the initiator identity of N-formylmethionyl-tRNA by promoting its recognition by IF2 and preventing the misappropriation of this tRNA by the elongation apparatus. This is Methionyl-tRNA formyltransferase from Herminiimonas arsenicoxydans.